We begin with the raw amino-acid sequence, 129 residues long: Putative transmembrane protein 10 (129 aa).

A run of 3 helical transmembrane segments spans residues 3 to 23 (NFSYFSTIFSIALMSSNAFAG), 27 to 47 (LLVGFCPCIEINTLTLFLSSL), and 85 to 105 (SSVLSCFTSCFVIYFYPFFVF).

The protein resides in the host membrane. This is Putative transmembrane protein 10 (SIFV0010) from Sulfolobus islandicus filamentous virus (isolate Iceland/Hveragerdi) (SIFV).